The chain runs to 940 residues: Protein translocase subunit SecA (940 aa).

Residues glutamine 86, 104–108 (GEGKT), and aspartate 494 each bind ATP. Residues 884-940 (ATAKAQKDQQAEDAVLVGEDEPETPQGPPARGAFGQPTGASSAPQNREERRKADRRK) are disordered. Over residues 929-940 (NREERRKADRRK) the composition is skewed to basic and acidic residues.

It belongs to the SecA family. As to quaternary structure, monomer and homodimer. Part of the essential Sec protein translocation apparatus which comprises SecA, SecYEG and auxiliary proteins SecDF. Other proteins may also be involved.

The protein localises to the cell membrane. Its subcellular location is the cytoplasm. It carries out the reaction ATP + H2O + cellular proteinSide 1 = ADP + phosphate + cellular proteinSide 2.. Part of the Sec protein translocase complex. Interacts with the SecYEG preprotein conducting channel. Has a central role in coupling the hydrolysis of ATP to the transfer of proteins into and across the cell membrane, serving as an ATP-driven molecular motor driving the stepwise translocation of polypeptide chains across the membrane. The polypeptide is Protein translocase subunit SecA (Clavibacter sepedonicus (Clavibacter michiganensis subsp. sepedonicus)).